Reading from the N-terminus, the 833-residue chain is Probable serine/threonine-protein kinase DDB_G0277165 (833 aa).

A Protein kinase domain is found at 9–262 (FIIGKTLGQG…IKEIKEHPWF (254 aa)). ATP is bound by residues 15-23 (LGQGTTGKV) and lysine 38. The Proton acceptor role is filled by aspartate 133. The UBA domain occupies 288–329 (QIDEDIFRSLMALGVGTIDEVKQQLVSNQKSATLIYYRLLEE). Positions 338–351 (NKYGYKPKETRRNS) are enriched in basic and acidic residues. Disordered stretches follow at residues 338–472 (NKYG…ISPS), 528–626 (QALQ…PIEI), and 764–799 (FINP…GGQN). Low complexity-rich tracts occupy residues 365–432 (NNNN…NNNN) and 441–459 (SSSQ…QIPS). A compositionally biased stretch (polar residues) spans 460-472 (NSTSQESMQISPS). The span at 528 to 589 (QALQQHHQQQ…SSTSTSPQLS (62 aa)) shows a compositional bias: low complexity. The segment covering 600-625 (GSMTASTNPATSPTMSHRGKTSSPIE) has biased composition (polar residues).

Belongs to the protein kinase superfamily. CAMK Ser/Thr protein kinase family.

It catalyses the reaction L-seryl-[protein] + ATP = O-phospho-L-seryl-[protein] + ADP + H(+). It carries out the reaction L-threonyl-[protein] + ATP = O-phospho-L-threonyl-[protein] + ADP + H(+). This chain is Probable serine/threonine-protein kinase DDB_G0277165, found in Dictyostelium discoideum (Social amoeba).